Reading from the N-terminus, the 75-residue chain is DNA-directed RNA polymerase subunit omega (75 aa).

It belongs to the RNA polymerase subunit omega family. The RNAP catalytic core consists of 2 alpha, 1 beta, 1 beta' and 1 omega subunit. When a sigma factor is associated with the core the holoenzyme is formed, which can initiate transcription.

The catalysed reaction is RNA(n) + a ribonucleoside 5'-triphosphate = RNA(n+1) + diphosphate. Functionally, promotes RNA polymerase assembly. Latches the N- and C-terminal regions of the beta' subunit thereby facilitating its interaction with the beta and alpha subunits. The polypeptide is DNA-directed RNA polymerase subunit omega (Lysinibacillus sphaericus (strain C3-41)).